Here is an 88-residue protein sequence, read N- to C-terminus: Small ribosomal subunit protein bS16c (88 aa).

As to quaternary structure, component of the chloroplast small ribosomal subunit (SSU). Mature 70S chloroplast ribosomes of higher plants consist of a small (30S) and a large (50S) subunit. The 30S small subunit contains 1 molecule of ribosomal RNA (16S rRNA) and 24 different proteins. The 50S large subunit contains 3 rRNA molecules (23S, 5S and 4.5S rRNA) and 33 different proteins.

The protein localises to the plastid. Its subcellular location is the chloroplast. Component of the chloroplast ribosome (chloro-ribosome), a dedicated translation machinery responsible for the synthesis of chloroplast genome-encoded proteins, including proteins of the transcription and translation machinery and components of the photosynthetic apparatus. The sequence is that of Small ribosomal subunit protein bS16c from Spinacia oleracea (Spinach).